Here is a 207-residue protein sequence, read N- to C-terminus: Dephospho-CoA kinase (207 aa).

The DPCK domain maps to 5–207 (IVGLTGGIAS…AALQTHRIEN (203 aa)). ATP is bound at residue 13-18 (ASGKSA).

Belongs to the CoaE family.

The protein resides in the cytoplasm. It carries out the reaction 3'-dephospho-CoA + ATP = ADP + CoA + H(+). The protein operates within cofactor biosynthesis; coenzyme A biosynthesis; CoA from (R)-pantothenate: step 5/5. Its function is as follows. Catalyzes the phosphorylation of the 3'-hydroxyl group of dephosphocoenzyme A to form coenzyme A. This Xanthomonas campestris pv. campestris (strain ATCC 33913 / DSM 3586 / NCPPB 528 / LMG 568 / P 25) protein is Dephospho-CoA kinase.